A 155-amino-acid polypeptide reads, in one-letter code: Ribosomal RNA large subunit methyltransferase H (155 aa).

Gly-103 contributes to the S-adenosyl-L-methionine binding site.

Belongs to the RNA methyltransferase RlmH family. Homodimer.

It localises to the cytoplasm. It catalyses the reaction pseudouridine(1915) in 23S rRNA + S-adenosyl-L-methionine = N(3)-methylpseudouridine(1915) in 23S rRNA + S-adenosyl-L-homocysteine + H(+). In terms of biological role, specifically methylates the pseudouridine at position 1915 (m3Psi1915) in 23S rRNA. The sequence is that of Ribosomal RNA large subunit methyltransferase H from Caulobacter vibrioides (strain ATCC 19089 / CIP 103742 / CB 15) (Caulobacter crescentus).